A 336-amino-acid polypeptide reads, in one-letter code: Aspartate--ammonia ligase (336 aa).

The protein belongs to the class-II aminoacyl-tRNA synthetase family. AsnA subfamily.

It localises to the cytoplasm. It carries out the reaction L-aspartate + NH4(+) + ATP = L-asparagine + AMP + diphosphate + H(+). It participates in amino-acid biosynthesis; L-asparagine biosynthesis; L-asparagine from L-aspartate (ammonia route): step 1/1. This Clostridium perfringens (strain 13 / Type A) protein is Aspartate--ammonia ligase.